A 156-amino-acid polypeptide reads, in one-letter code: Small ribosomal subunit protein uS7 (156 aa).

Belongs to the universal ribosomal protein uS7 family. As to quaternary structure, part of the 30S ribosomal subunit. Contacts proteins S9 and S11.

Its function is as follows. One of the primary rRNA binding proteins, it binds directly to 16S rRNA where it nucleates assembly of the head domain of the 30S subunit. Is located at the subunit interface close to the decoding center, probably blocks exit of the E-site tRNA. In Paraburkholderia phymatum (strain DSM 17167 / CIP 108236 / LMG 21445 / STM815) (Burkholderia phymatum), this protein is Small ribosomal subunit protein uS7.